The chain runs to 343 residues: Dihydroorotase (343 aa).

Residues H13 and H15 each contribute to the Zn(2+) site. Substrate is bound by residues 15–17 and N41; that span reads HLR. The Zn(2+) site is built by K99, H136, and H174. K99 carries the N6-carboxylysine modification. A substrate-binding site is contributed by H136. L219 serves as a coordination point for substrate. D247 contacts Zn(2+). D247 is a catalytic residue. Residues H251 and A263 each coordinate substrate.

This sequence belongs to the metallo-dependent hydrolases superfamily. DHOase family. Class II DHOase subfamily. Homodimer. It depends on Zn(2+) as a cofactor.

It catalyses the reaction (S)-dihydroorotate + H2O = N-carbamoyl-L-aspartate + H(+). The protein operates within pyrimidine metabolism; UMP biosynthesis via de novo pathway; (S)-dihydroorotate from bicarbonate: step 3/3. Its function is as follows. Catalyzes the reversible cyclization of carbamoyl aspartate to dihydroorotate. The chain is Dihydroorotase from Shewanella oneidensis (strain ATCC 700550 / JCM 31522 / CIP 106686 / LMG 19005 / NCIMB 14063 / MR-1).